The chain runs to 196 residues: Ribosome maturation factor RimM (196 aa).

One can recognise a PRC barrel domain in the interval Gln-118–Phe-196.

It belongs to the RimM family. In terms of assembly, binds ribosomal protein uS19.

The protein localises to the cytoplasm. Its function is as follows. An accessory protein needed during the final step in the assembly of 30S ribosomal subunit, possibly for assembly of the head region. Essential for efficient processing of 16S rRNA. May be needed both before and after RbfA during the maturation of 16S rRNA. It has affinity for free ribosomal 30S subunits but not for 70S ribosomes. In Alcanivorax borkumensis (strain ATCC 700651 / DSM 11573 / NCIMB 13689 / SK2), this protein is Ribosome maturation factor RimM.